The following is a 369-amino-acid chain: MTKATDEGTVIAVQANYYWVRLRNVTSQPLLCTRRTRLKKVGQKVMVGDQVRVELPPSLLLHGRSNTAPVPMVAEGDLGAIAKVYPRRTVLERPPVANAEQICLVFALTDPPLEEWQLSRFLVQAEATGLEISLCFNKQDLVQETDVKFWGDRLAAWGYAPIIISVENRWGVEKLQEKLRSRISLMAGPSGVGKSSLINLLVPGVEQQVKNVSGKLRKGRHTTRHVELFDLPHGGLLADTPGFNQPDLAVEPAQLIHLFPEARQQLTGQECFFKDCLHRGEPDCAVGQDWERYEHYLTFLEEVLAQQNPENSRETDTGLKTKTGSDGQEYDEPKLETKKYRRHSRRQEHQELQSFCEQTDLDNLQEDWE.

The region spanning 88 to 246 (RTVLERPPVA…LADTPGFNQP (159 aa)) is the CP-type G domain. GTP-binding positions include 137–140 (NKQD) and 188–196 (GPSGVGKSS). Residues C271, C276, H278, and C284 each contribute to the Zn(2+) site. A disordered region spans residues 307–369 (QNPENSRETD…DLDNLQEDWE (63 aa)). Acidic residues predominate over residues 359 to 369 (TDLDNLQEDWE).

This sequence belongs to the TRAFAC class YlqF/YawG GTPase family. RsgA subfamily. Monomer. Associates with 30S ribosomal subunit, binds 16S rRNA. It depends on Zn(2+) as a cofactor.

It is found in the cytoplasm. Functionally, one of several proteins that assist in the late maturation steps of the functional core of the 30S ribosomal subunit. Helps release RbfA from mature subunits. May play a role in the assembly of ribosomal proteins into the subunit. Circularly permuted GTPase that catalyzes slow GTP hydrolysis, GTPase activity is stimulated by the 30S ribosomal subunit. This chain is Small ribosomal subunit biogenesis GTPase RsgA, found in Synechocystis sp. (strain ATCC 27184 / PCC 6803 / Kazusa).